The chain runs to 259 residues: Deoxyribose-phosphate aldolase (259 aa).

The Proton donor/acceptor role is filled by Asp-102. Catalysis depends on Lys-167, which acts as the Schiff-base intermediate with acetaldehyde. The active-site Proton donor/acceptor is the Lys-201.

The protein belongs to the DeoC/FbaB aldolase family. DeoC type 2 subfamily.

The protein resides in the cytoplasm. The catalysed reaction is 2-deoxy-D-ribose 5-phosphate = D-glyceraldehyde 3-phosphate + acetaldehyde. The protein operates within carbohydrate degradation; 2-deoxy-D-ribose 1-phosphate degradation; D-glyceraldehyde 3-phosphate and acetaldehyde from 2-deoxy-alpha-D-ribose 1-phosphate: step 2/2. Its function is as follows. Catalyzes a reversible aldol reaction between acetaldehyde and D-glyceraldehyde 3-phosphate to generate 2-deoxy-D-ribose 5-phosphate. This is Deoxyribose-phosphate aldolase from Klebsiella pneumoniae (strain 342).